The chain runs to 316 residues: uncharacterized protein (316 aa).

In terms of domain architecture, S4 RNA-binding spans E16 to E89. The active site involves D140.

This sequence belongs to the pseudouridine synthase RluA family.

It carries out the reaction a uridine in RNA = a pseudouridine in RNA. This is an uncharacterized protein from Aquifex aeolicus (strain VF5).